The sequence spans 340 residues: Holliday junction branch migration complex subunit RuvB (340 aa).

Residues methionine 1–tyrosine 182 are large ATPase domain (RuvB-L). Residues leucine 21, arginine 22, glycine 63, lysine 66, threonine 67, threonine 68, glutamate 129–phenylalanine 131, arginine 172, tyrosine 182, and arginine 219 each bind ATP. Threonine 67 lines the Mg(2+) pocket. A small ATPAse domain (RuvB-S) region spans residues threonine 183–glycine 253. A head domain (RuvB-H) region spans residues histidine 256–glycine 340. DNA contacts are provided by arginine 292, arginine 311, and arginine 316.

It belongs to the RuvB family. As to quaternary structure, homohexamer. Forms an RuvA(8)-RuvB(12)-Holliday junction (HJ) complex. HJ DNA is sandwiched between 2 RuvA tetramers; dsDNA enters through RuvA and exits via RuvB. An RuvB hexamer assembles on each DNA strand where it exits the tetramer. Each RuvB hexamer is contacted by two RuvA subunits (via domain III) on 2 adjacent RuvB subunits; this complex drives branch migration. In the full resolvosome a probable DNA-RuvA(4)-RuvB(12)-RuvC(2) complex forms which resolves the HJ.

It is found in the cytoplasm. The enzyme catalyses ATP + H2O = ADP + phosphate + H(+). Functionally, the RuvA-RuvB-RuvC complex processes Holliday junction (HJ) DNA during genetic recombination and DNA repair, while the RuvA-RuvB complex plays an important role in the rescue of blocked DNA replication forks via replication fork reversal (RFR). RuvA specifically binds to HJ cruciform DNA, conferring on it an open structure. The RuvB hexamer acts as an ATP-dependent pump, pulling dsDNA into and through the RuvAB complex. RuvB forms 2 homohexamers on either side of HJ DNA bound by 1 or 2 RuvA tetramers; 4 subunits per hexamer contact DNA at a time. Coordinated motions by a converter formed by DNA-disengaged RuvB subunits stimulates ATP hydrolysis and nucleotide exchange. Immobilization of the converter enables RuvB to convert the ATP-contained energy into a lever motion, pulling 2 nucleotides of DNA out of the RuvA tetramer per ATP hydrolyzed, thus driving DNA branch migration. The RuvB motors rotate together with the DNA substrate, which together with the progressing nucleotide cycle form the mechanistic basis for DNA recombination by continuous HJ branch migration. Branch migration allows RuvC to scan DNA until it finds its consensus sequence, where it cleaves and resolves cruciform DNA. The sequence is that of Holliday junction branch migration complex subunit RuvB from Roseobacter denitrificans (strain ATCC 33942 / OCh 114) (Erythrobacter sp. (strain OCh 114)).